The sequence spans 296 residues: Protoheme IX farnesyltransferase (296 aa).

A run of 9 helical transmembrane segments spans residues 29 to 49, 54 to 74, 98 to 118, 121 to 141, 147 to 167, 175 to 195, 221 to 241, 246 to 266, and 275 to 295; these read LSGL…GHVA, ALTV…NCWM, FTAL…LALV, PLTA…YTPM, LALL…WTAA, GLAL…AVSI, WIAA…PLRV, YGAV…AGVG, and NFFL…FLGA.

The protein belongs to the UbiA prenyltransferase family. Protoheme IX farnesyltransferase subfamily.

It localises to the cell inner membrane. It catalyses the reaction heme b + (2E,6E)-farnesyl diphosphate + H2O = Fe(II)-heme o + diphosphate. It functions in the pathway porphyrin-containing compound metabolism; heme O biosynthesis; heme O from protoheme: step 1/1. Its function is as follows. Converts heme B (protoheme IX) to heme O by substitution of the vinyl group on carbon 2 of heme B porphyrin ring with a hydroxyethyl farnesyl side group. This chain is Protoheme IX farnesyltransferase, found in Anaeromyxobacter sp. (strain Fw109-5).